Here is a 1337-residue protein sequence, read N- to C-terminus: Multidrug resistance protein fer6 (1337 aa).

An N-terminal signal peptide occupies residues 1–23 (MTPEASANWFSLCWFAWIDPILT). N-linked (GlcNAc...) asparagine glycosylation occurs at Asn71. Transmembrane regions (helical) follow at residues 94-114 (FWIG…SPLL) and 138-158 (LGSG…CVFL). One can recognise an ABC transmembrane type-1 1 domain in the interval 95-386 (WIGGLLKLLA…LPIAWNAIVD (292 aa)). A glycan (N-linked (GlcNAc...) asparagine) is linked at Asn187. Helical transmembrane passes span 220–242 (FFHM…IWSL), 247–269 (LPGI…RLFA), 331–351 (ALAF…YALV), and 359–379 (ILFS…FLPI). The ABC transporter 1 domain maps to 417 to 667 (IQLEDASFTW…KGRVAELLLT (251 aa)). The disordered stretch occupies residues 432–460 (ADTAKPVNEKKGQDSPSNEKETPVDRAST). Over residues 438 to 455 (VNEKKGQDSPSNEKETPV) the composition is skewed to basic and acidic residues. Residue Asn465 is glycosylated (N-linked (GlcNAc...) asparagine). ATP is bound at residue 478–485 (GGVGSGKS). Positions 699–751 (GSASNRNSEASESTTTTVNAESKDTSNAEGVTNKTEKKDLVAPPAQAKSKALM) are disordered. Residues 700–718 (SASNRNSEASESTTTTVNA) are compositionally biased toward low complexity. A glycan (N-linked (GlcNAc...) asparagine) is linked at Asn731. The next 6 helical transmembrane spans lie at 769–789 (YLNA…VLVF), 817–837 (GIYA…GVIF), 890–909 (AMRT…VLIA), 915–933 (FLIP…AAYY), 999–1019 (LSVR…ILVV), and 1028–1048 (GETG…GWMI). Residues 781–1056 (LFLVAVLVFQ…MIRHAAELEN (276 aa)) form the ABC transmembrane type-1 2 domain. Residue Asn1057 is glycosylated (N-linked (GlcNAc...) asparagine). Residues 1097–1325 (IRFEGVEAKY…EKGAFRALCD (229 aa)) enclose the ABC transporter 2 domain. 1131 to 1138 (GRTGAGKS) lines the ATP pocket. The N-linked (GlcNAc...) asparagine glycan is linked to Asn1227.

Belongs to the ABC transporter superfamily. ABCC family. Conjugate transporter (TC 3.A.1.208) subfamily.

It localises to the membrane. Functionally, multidrug resistance protein; part of the gene cluster that mediates the biosynthesis of siderophore ferrichrome A which is contributing to organismal virulence. The protein is Multidrug resistance protein fer6 of Mycosarcoma maydis (Corn smut fungus).